A 448-amino-acid chain; its full sequence is Exodeoxyribonuclease 7 large subunit (448 aa).

The protein belongs to the XseA family. Heterooligomer composed of large and small subunits.

Its subcellular location is the cytoplasm. The enzyme catalyses Exonucleolytic cleavage in either 5'- to 3'- or 3'- to 5'-direction to yield nucleoside 5'-phosphates.. Its function is as follows. Bidirectionally degrades single-stranded DNA into large acid-insoluble oligonucleotides, which are then degraded further into small acid-soluble oligonucleotides. The polypeptide is Exodeoxyribonuclease 7 large subunit (Shewanella sp. (strain MR-7)).